The following is a 277-amino-acid chain: Shikimate dehydrogenase (NADP(+)) (277 aa).

Shikimate is bound by residues 15-17 (SLS) and T62. The active-site Proton acceptor is K66. The shikimate site is built by N87 and D102. NADP(+)-binding positions include 127–131 (GAGGA), 151–156 (NRTVDK), and I219. Residue Y221 coordinates shikimate. G242 lines the NADP(+) pocket.

This sequence belongs to the shikimate dehydrogenase family. In terms of assembly, homodimer.

The catalysed reaction is shikimate + NADP(+) = 3-dehydroshikimate + NADPH + H(+). It participates in metabolic intermediate biosynthesis; chorismate biosynthesis; chorismate from D-erythrose 4-phosphate and phosphoenolpyruvate: step 4/7. Involved in the biosynthesis of the chorismate, which leads to the biosynthesis of aromatic amino acids. Catalyzes the reversible NADPH linked reduction of 3-dehydroshikimate (DHSA) to yield shikimate (SA). The sequence is that of Shikimate dehydrogenase (NADP(+)) from Bacillus cereus (strain 03BB102).